The sequence spans 341 residues: Ribose-phosphate pyrophosphokinase 5 (341 aa).

Residues aspartate 152, histidine 154, and aspartate 167 each coordinate Mg(2+).

This sequence belongs to the ribose-phosphate pyrophosphokinase family.

Its subcellular location is the cytoplasm. The catalysed reaction is D-ribose 5-phosphate + ATP = 5-phospho-alpha-D-ribose 1-diphosphate + AMP + H(+). Its pathway is metabolic intermediate biosynthesis; 5-phospho-alpha-D-ribose 1-diphosphate biosynthesis; 5-phospho-alpha-D-ribose 1-diphosphate from D-ribose 5-phosphate (route I): step 1/1. Its function is as follows. 5-phosphoribose 1-diphosphate synthase involved in nucleotide, histidine, and tryptophan biosynthesis. Active in heteromultimeric complexes with other 5-phosphoribose 1-diphosphate synthases. This is Ribose-phosphate pyrophosphokinase 5 from Schizosaccharomyces pombe (strain 972 / ATCC 24843) (Fission yeast).